A 602-amino-acid polypeptide reads, in one-letter code: Aspartate--tRNA(Asp/Asn) ligase (602 aa).

Glutamate 176 contacts L-aspartate. An aspartate region spans residues 200-203 (QQFK). Residues arginine 222 and histidine 452 each contribute to the L-aspartate site. Residue 222-224 (RDE) coordinates ATP. Glutamate 490 lines the ATP pocket. Residue arginine 497 coordinates L-aspartate. 542-545 (GIDR) is a binding site for ATP.

Belongs to the class-II aminoacyl-tRNA synthetase family. Type 1 subfamily. In terms of assembly, homodimer.

It is found in the cytoplasm. It catalyses the reaction tRNA(Asx) + L-aspartate + ATP = L-aspartyl-tRNA(Asx) + AMP + diphosphate. Functionally, aspartyl-tRNA synthetase with relaxed tRNA specificity since it is able to aspartylate not only its cognate tRNA(Asp) but also tRNA(Asn). Reaction proceeds in two steps: L-aspartate is first activated by ATP to form Asp-AMP and then transferred to the acceptor end of tRNA(Asp/Asn). This is Aspartate--tRNA(Asp/Asn) ligase from Rickettsia akari (strain Hartford).